Consider the following 469-residue polypeptide: Argininosuccinate lyase (469 aa).

It belongs to the lyase 1 family. Argininosuccinate lyase subfamily.

Its subcellular location is the cytoplasm. The catalysed reaction is 2-(N(omega)-L-arginino)succinate = fumarate + L-arginine. It functions in the pathway amino-acid biosynthesis; L-arginine biosynthesis; L-arginine from L-ornithine and carbamoyl phosphate: step 3/3. This is Argininosuccinate lyase from Burkholderia multivorans (strain ATCC 17616 / 249).